The primary structure comprises 134 residues: Retinoid-binding protein 7 (134 aa).

This sequence belongs to the calycin superfamily. Fatty-acid binding protein (FABP) family. In terms of tissue distribution, expressed primarily in kidney, heart and transverse colon. Detected in adult lymph node, appendix, ascending colon, and in fetal heart and spleen.

It localises to the cytoplasm. Its function is as follows. Intracellular transport of retinol. This chain is Retinoid-binding protein 7 (RBP7), found in Homo sapiens (Human).